The sequence spans 132 residues: Small ribosomal subunit protein uS8 (132 aa).

It belongs to the universal ribosomal protein uS8 family. In terms of assembly, part of the 30S ribosomal subunit. Contacts proteins S5 and S12.

One of the primary rRNA binding proteins, it binds directly to 16S rRNA central domain where it helps coordinate assembly of the platform of the 30S subunit. The chain is Small ribosomal subunit protein uS8 from Clostridioides difficile (strain 630) (Peptoclostridium difficile).